A 267-amino-acid polypeptide reads, in one-letter code: Cytokinesis defective protein 7 (267 aa).

Residues Arg-244 to Ala-267 are disordered. Basic and acidic residues predominate over residues Gln-258–Ala-267.

This chain is Cytokinesis defective protein 7, found in Caenorhabditis elegans.